The chain runs to 437 residues: tRNA-2-methylthio-N(6)-dimethylallyladenosine synthase (437 aa).

The 117-residue stretch at M1–S117 folds into the MTTase N-terminal domain. Residues C10, C46, C80, C156, C160, and C163 each coordinate [4Fe-4S] cluster. A Radical SAM core domain is found at R142–K371. Positions L374 to G435 constitute a TRAM domain.

Belongs to the methylthiotransferase family. MiaB subfamily. As to quaternary structure, monomer. [4Fe-4S] cluster is required as a cofactor.

The protein resides in the cytoplasm. It catalyses the reaction N(6)-dimethylallyladenosine(37) in tRNA + (sulfur carrier)-SH + AH2 + 2 S-adenosyl-L-methionine = 2-methylsulfanyl-N(6)-dimethylallyladenosine(37) in tRNA + (sulfur carrier)-H + 5'-deoxyadenosine + L-methionine + A + S-adenosyl-L-homocysteine + 2 H(+). Its function is as follows. Catalyzes the methylthiolation of N6-(dimethylallyl)adenosine (i(6)A), leading to the formation of 2-methylthio-N6-(dimethylallyl)adenosine (ms(2)i(6)A) at position 37 in tRNAs that read codons beginning with uridine. The polypeptide is tRNA-2-methylthio-N(6)-dimethylallyladenosine synthase (Sulfurihydrogenibium sp. (strain YO3AOP1)).